A 309-amino-acid chain; its full sequence is Malate dehydrogenase (309 aa).

NAD(+) is bound by residues 10–15 (GAGNVG) and Asp34. Substrate-binding residues include Arg83 and Arg89. Residues Asn96 and 119–121 (VTN) contribute to the NAD(+) site. Asn121 and Arg152 together coordinate substrate. The active-site Proton acceptor is His176.

Belongs to the LDH/MDH superfamily. MDH type 3 family.

It catalyses the reaction (S)-malate + NAD(+) = oxaloacetate + NADH + H(+). Catalyzes the reversible oxidation of malate to oxaloacetate. This chain is Malate dehydrogenase, found in Desulforudis audaxviator (strain MP104C).